The sequence spans 815 residues: Probable E3 ubiquitin-protein ligase hulA (815 aa).

The C2 domain maps to 1 to 112 (MGSNLPSQPN…EMGGDEMLTR (112 aa)). 2 disordered regions span residues 134 to 237 (NLST…GWER) and 253 to 353 (RTTT…YFVD). Composition is skewed to low complexity over residues 165–185 (ASAA…SNPS) and 202–212 (APGAAAGATPT). Composition is skewed to polar residues over residues 213-226 (NTQG…SFED) and 253-270 (RTTT…QTQR). The WW 1 domain occupies 229 to 262 (GRLPAGWERREDNLGRTYYVDHNTRTTTWTRPSS). Residues 279–294 (LERRAHQSRMLPEDRT) show a composition bias toward basic and acidic residues. Positions 295–308 (GANSPNLPETSQQA) are enriched in polar residues. Over residues 324–333 (ATGATTAGTG) the composition is skewed to low complexity. WW domains follow at residues 333–366 (GELP…DPRR) and 393–426 (GPLP…DPRL). In terms of domain architecture, HECT spans 482 to 815 (SASDLKKRLM…VEETLGFGQE (334 aa)). Cys-783 functions as the Glycyl thioester intermediate in the catalytic mechanism.

The protein belongs to the RSP5/NEDD4 family. As to quaternary structure, interacts with creD.

The protein localises to the cytoplasm. The catalysed reaction is S-ubiquitinyl-[E2 ubiquitin-conjugating enzyme]-L-cysteine + [acceptor protein]-L-lysine = [E2 ubiquitin-conjugating enzyme]-L-cysteine + N(6)-ubiquitinyl-[acceptor protein]-L-lysine.. Its pathway is protein modification; protein ubiquitination. Functionally, E3 ubiquitin-protein ligase which accepts ubiquitin from an E2 ubiquitin-conjugating enzyme in the form of a thioester and then directly transfers the ubiquitin to targeted substrates. Probably involved in the regulatory network controlling carbon source utilization. This Aspergillus clavatus (strain ATCC 1007 / CBS 513.65 / DSM 816 / NCTC 3887 / NRRL 1 / QM 1276 / 107) protein is Probable E3 ubiquitin-protein ligase hulA (hulA).